Consider the following 321-residue polypeptide: MTPELRHMLRDDDLNHEEQKQVLELAIKFHHDRFYKQPFAGPQAVAVLFDKPSTRTRSSFSIGVAELGGYPLVIDKSGSQLGRGEPVADTARVLDRMAYGVVWRTFGQDRVEEMAKYSTHPVVNALTDDFHPCQILADFQTIAEHRGGVDNLKNQTIAYLGDAANNMANSYLLGGAVAGMDVRVAGPHGYLPRPDIVADAKRVAAETGGSILVTTDAKEAVKDADCVFTDTWVSMGEEAEYAIRSKPFWDYQVNTELMALAKPDALFQHCLPAYRGKEVTAEVIDGPQSVVWDEAENRLHAQKALLTWLTGKARGDESLLA.

Residues 53–56, Gln-80, Arg-104, and 131–134 contribute to the carbamoyl phosphate site; these read STRT and HPCQ. Residues Asn-166, Asp-230, and 234–235 each bind L-ornithine; that span reads SM. Carbamoyl phosphate is bound by residues 270-271 and Arg-298; that span reads CL.

This sequence belongs to the aspartate/ornithine carbamoyltransferase superfamily. OTCase family.

The protein resides in the cytoplasm. It carries out the reaction carbamoyl phosphate + L-ornithine = L-citrulline + phosphate + H(+). Its pathway is amino-acid degradation; L-arginine degradation via ADI pathway; carbamoyl phosphate from L-arginine: step 2/2. Functionally, reversibly catalyzes the transfer of the carbamoyl group from carbamoyl phosphate (CP) to the N(epsilon) atom of ornithine (ORN) to produce L-citrulline. The chain is Ornithine carbamoyltransferase from Bifidobacterium longum subsp. infantis (strain ATCC 15697 / DSM 20088 / JCM 1222 / NCTC 11817 / S12).